We begin with the raw amino-acid sequence, 170 residues long: Acireductone dioxygenase (170 aa).

Fe(2+) is bound by residues histidine 99, histidine 101, glutamate 105, and histidine 144. Ni(2+)-binding residues include histidine 99, histidine 101, glutamate 105, and histidine 144.

This sequence belongs to the acireductone dioxygenase (ARD) family. Monomer. The cofactor is Fe(2+). It depends on Ni(2+) as a cofactor.

It catalyses the reaction 1,2-dihydroxy-5-(methylsulfanyl)pent-1-en-3-one + O2 = 3-(methylsulfanyl)propanoate + CO + formate + 2 H(+). It carries out the reaction 1,2-dihydroxy-5-(methylsulfanyl)pent-1-en-3-one + O2 = 4-methylsulfanyl-2-oxobutanoate + formate + 2 H(+). It functions in the pathway amino-acid biosynthesis; L-methionine biosynthesis via salvage pathway; L-methionine from S-methyl-5-thio-alpha-D-ribose 1-phosphate: step 5/6. Functionally, catalyzes 2 different reactions between oxygen and the acireductone 1,2-dihydroxy-3-keto-5-methylthiopentene (DHK-MTPene) depending upon the metal bound in the active site. Fe-containing acireductone dioxygenase (Fe-ARD) produces formate and 2-keto-4-methylthiobutyrate (KMTB), the alpha-ketoacid precursor of methionine in the methionine recycle pathway. Ni-containing acireductone dioxygenase (Ni-ARD) produces methylthiopropionate, carbon monoxide and formate, and does not lie on the methionine recycle pathway. The sequence is that of Acireductone dioxygenase from Bacillus cytotoxicus (strain DSM 22905 / CIP 110041 / 391-98 / NVH 391-98).